The following is a 280-amino-acid chain: Large ribosomal subunit protein uL2 (280 aa).

3 disordered regions span residues 1-20 (MAIR…SVSM), 29-58 (PEKS…GGGH), and 225-280 (VMNP…NKKR). A compositionally biased stretch (basic residues) spans 45–58 (SHGHITTRHRGGGH). Over residues 253 to 269 (KEGRTRRPKRYSDDMIV) the composition is skewed to basic and acidic residues. Residues 270-280 (RRRRANKNKKR) are compositionally biased toward basic residues.

This sequence belongs to the universal ribosomal protein uL2 family. Part of the 50S ribosomal subunit. Forms a bridge to the 30S subunit in the 70S ribosome.

One of the primary rRNA binding proteins. Required for association of the 30S and 50S subunits to form the 70S ribosome, for tRNA binding and peptide bond formation. It has been suggested to have peptidyltransferase activity; this is somewhat controversial. Makes several contacts with the 16S rRNA in the 70S ribosome. The protein is Large ribosomal subunit protein uL2 of Corynebacterium efficiens (strain DSM 44549 / YS-314 / AJ 12310 / JCM 11189 / NBRC 100395).